A 363-amino-acid polypeptide reads, in one-letter code: Phosphoserine aminotransferase (363 aa).

L-glutamate is bound at residue Arg-42. Residues 76-77, Trp-102, Thr-156, Asp-175, and Gln-198 contribute to the pyridoxal 5'-phosphate site; that span reads GR. Lys-199 bears the N6-(pyridoxal phosphate)lysine mark. 240 to 241 lines the pyridoxal 5'-phosphate pocket; that stretch reads NT.

This sequence belongs to the class-V pyridoxal-phosphate-dependent aminotransferase family. SerC subfamily. As to quaternary structure, homodimer. Pyridoxal 5'-phosphate is required as a cofactor.

The protein resides in the cytoplasm. The enzyme catalyses O-phospho-L-serine + 2-oxoglutarate = 3-phosphooxypyruvate + L-glutamate. The catalysed reaction is 4-(phosphooxy)-L-threonine + 2-oxoglutarate = (R)-3-hydroxy-2-oxo-4-phosphooxybutanoate + L-glutamate. It participates in amino-acid biosynthesis; L-serine biosynthesis; L-serine from 3-phospho-D-glycerate: step 2/3. Its pathway is cofactor biosynthesis; pyridoxine 5'-phosphate biosynthesis; pyridoxine 5'-phosphate from D-erythrose 4-phosphate: step 3/5. Its function is as follows. Catalyzes the reversible conversion of 3-phosphohydroxypyruvate to phosphoserine and of 3-hydroxy-2-oxo-4-phosphonooxybutanoate to phosphohydroxythreonine. The polypeptide is Phosphoserine aminotransferase (Shewanella sp. (strain MR-4)).